A 341-amino-acid polypeptide reads, in one-letter code: Guanine nucleotide-binding protein subunit beta (341 aa).

WD repeat units lie at residues 54–93 (GHLAKIYAMHWASDSRNLVSASQDGKLIVWDGYTTNKVHA), 96–135 (LRSSWVMTCAYAPSGSYVACGGLDNICSIYSLKTREGNVR), 142–180 (GHTGYLSCCRFLDDNQIVTSSGDMSCALWDIETGQQTTA), 183–222 (GHTGDVMSLSLSPDMRTFVSGACDASAKLWDIRDGMCKQT), 225–264 (GHESDINAITYFPNGYAFATGSDDATCRLFDIRADQEIGM), 269–308 (NIICGITSVAFSKSGRLLLGGYDDFNCNVWDVLRQERAGV), and 311–341 (GHDNRVSCLGVTEDGMAVATGSWDSFLRIWN).

The protein belongs to the WD repeat G protein beta family. G proteins are composed of 3 units, alpha, beta and gamma. The G protein beta1-gamma2 dimer interacts with calmodulin. As to expression, abundantly expressed in gills, gonad and mantle and at lower levels in digestion gland. Not detected in muscle.

Its subcellular location is the cytoplasm. Its function is as follows. Guanine nucleotide-binding proteins (G proteins) are involved as a modulator or transducer in various transmembrane signaling systems. The beta and gamma chains are required for the GTPase activity, for replacement of GDP by GTP, and for G protein-effector interaction. This Pinctada fucata (Akoya pearl oyster) protein is Guanine nucleotide-binding protein subunit beta.